We begin with the raw amino-acid sequence, 220 residues long: Ribosomal RNA small subunit methyltransferase G (220 aa).

S-adenosyl-L-methionine-binding positions include glycine 82, leucine 87, 105-107 (DST), 133-134 (VE), and arginine 147.

The protein belongs to the methyltransferase superfamily. RNA methyltransferase RsmG family.

Its subcellular location is the cytoplasm. Specifically methylates the N7 position of a guanine in 16S rRNA. The protein is Ribosomal RNA small subunit methyltransferase G of Chlorobium limicola (strain DSM 245 / NBRC 103803 / 6330).